A 147-amino-acid chain; its full sequence is Endoribonuclease YbeY (147 aa).

Zn(2+)-binding residues include His-111, His-115, and Asp-121.

It belongs to the endoribonuclease YbeY family. It depends on Zn(2+) as a cofactor.

Its subcellular location is the cytoplasm. In terms of biological role, single strand-specific metallo-endoribonuclease involved in late-stage 70S ribosome quality control and in maturation of the 3' terminus of the 16S rRNA. The chain is Endoribonuclease YbeY from Amoebophilus asiaticus (strain 5a2).